Reading from the N-terminus, the 126-residue chain is Large ribosomal subunit protein bL12 (126 aa).

This sequence belongs to the bacterial ribosomal protein bL12 family. Homodimer. Part of the ribosomal stalk of the 50S ribosomal subunit. Forms a multimeric L10(L12)X complex, where L10 forms an elongated spine to which 2 to 4 L12 dimers bind in a sequential fashion. Binds GTP-bound translation factors.

Forms part of the ribosomal stalk which helps the ribosome interact with GTP-bound translation factors. Is thus essential for accurate translation. This chain is Large ribosomal subunit protein bL12, found in Helicobacter hepaticus (strain ATCC 51449 / 3B1).